Consider the following 272-residue polypeptide: Prephenate dehydratase (272 aa).

A Prephenate dehydratase domain is found at 4–179 (AVIYTLPKGT…NKTRFILIGK (176 aa)). Residues 194–269 (IVFELKEDKP…TFINLLGKYP (76 aa)) form the ACT domain.

As to quaternary structure, homodimer.

It catalyses the reaction prephenate + H(+) = 3-phenylpyruvate + CO2 + H2O. It functions in the pathway amino-acid biosynthesis; L-phenylalanine biosynthesis; phenylpyruvate from prephenate: step 1/1. With respect to regulation, inhibited by L-phenylalanine but not by L-tyrosine or L-tryptophan. The chain is Prephenate dehydratase (pheA) from Methanocaldococcus jannaschii (strain ATCC 43067 / DSM 2661 / JAL-1 / JCM 10045 / NBRC 100440) (Methanococcus jannaschii).